The primary structure comprises 375 residues: MSCPVIELTQQLIRRPSLSPDDAGCQALLIDRLQAIGFTVERMDFADTQNFWAWRGQGETLAFAGHTDVVPPGDADRWINPPFEPTIRDGMLFGRGAADMKGSLAAMVVAAERFVAQHPNHTGRLAFLITSDEEASAHNGTVKVVEALMARNERLDYCLVGEPSSIEVVGDVVKNGRRGSLTCNLTIHGVQGHVAYPHLADNPVHRAAPFLNELVAIEWDQGNEFFPATSMQIANIQAGTGSNNVIPGELFVQFNFRFSTELTDEMIKAQVLALLEKHQLRYTVDWWLSGQPFLTARGKLVDAVVNAVEHYNEIKPQLLTTGGTSDGRFIARMGAQVVELGPVNATIHKINECVNAADLQLLARMYQRIMEQLVA.

Zn(2+) is bound at residue His66. Residue Asp68 is part of the active site. Asp99 is a binding site for Zn(2+). Glu133 serves as the catalytic Proton acceptor. Residues Glu134, Glu162, and His348 each contribute to the Zn(2+) site.

It belongs to the peptidase M20A family. DapE subfamily. In terms of assembly, homodimer. The cofactor is Zn(2+). Co(2+) serves as cofactor.

The enzyme catalyses N-succinyl-(2S,6S)-2,6-diaminopimelate + H2O = (2S,6S)-2,6-diaminopimelate + succinate. It participates in amino-acid biosynthesis; L-lysine biosynthesis via DAP pathway; LL-2,6-diaminopimelate from (S)-tetrahydrodipicolinate (succinylase route): step 3/3. Its function is as follows. Catalyzes the hydrolysis of N-succinyl-L,L-diaminopimelic acid (SDAP), forming succinate and LL-2,6-diaminopimelate (DAP), an intermediate involved in the bacterial biosynthesis of lysine and meso-diaminopimelic acid, an essential component of bacterial cell walls. This chain is Succinyl-diaminopimelate desuccinylase, found in Shigella sonnei (strain Ss046).